A 228-amino-acid polypeptide reads, in one-letter code: 5'-methylthioadenosine/S-adenosylhomocysteine nucleosidase (228 aa).

Glu11 serves as the catalytic Proton acceptor. Residues Gly77, Ile151, and 172 to 173 contribute to the substrate site; that span reads ME. Asp196 (proton donor) is an active-site residue.

It belongs to the PNP/UDP phosphorylase family. MtnN subfamily.

It catalyses the reaction S-adenosyl-L-homocysteine + H2O = S-(5-deoxy-D-ribos-5-yl)-L-homocysteine + adenine. The catalysed reaction is S-methyl-5'-thioadenosine + H2O = 5-(methylsulfanyl)-D-ribose + adenine. The enzyme catalyses 5'-deoxyadenosine + H2O = 5-deoxy-D-ribose + adenine. Its pathway is amino-acid biosynthesis; L-methionine biosynthesis via salvage pathway; S-methyl-5-thio-alpha-D-ribose 1-phosphate from S-methyl-5'-thioadenosine (hydrolase route): step 1/2. Functionally, catalyzes the irreversible cleavage of the glycosidic bond in both 5'-methylthioadenosine (MTA) and S-adenosylhomocysteine (SAH/AdoHcy) to adenine and the corresponding thioribose, 5'-methylthioribose and S-ribosylhomocysteine, respectively. Also cleaves 5'-deoxyadenosine, a toxic by-product of radical S-adenosylmethionine (SAM) enzymes, into 5-deoxyribose and adenine. The sequence is that of 5'-methylthioadenosine/S-adenosylhomocysteine nucleosidase from Staphylococcus aureus (strain JH1).